A 415-amino-acid chain; its full sequence is ATP-dependent Clp protease ATP-binding subunit ClpX (415 aa).

Positions 1–52 constitute a ClpX-type ZB domain; it reads MAESKNNKKRCSFCGRSENEVGFLITGMNGYICDSCATQAYEITQEAMGAGK. Zn(2+)-binding residues include cysteine 11, cysteine 14, cysteine 33, and cysteine 36. 121 to 128 is an ATP binding site; the sequence is STGTGKTL.

Belongs to the ClpX chaperone family. As to quaternary structure, component of the ClpX-ClpP complex. Forms a hexameric ring that, in the presence of ATP, binds to fourteen ClpP subunits assembled into a disk-like structure with a central cavity, resembling the structure of eukaryotic proteasomes.

In terms of biological role, ATP-dependent specificity component of the Clp protease. It directs the protease to specific substrates. Can perform chaperone functions in the absence of ClpP. The polypeptide is ATP-dependent Clp protease ATP-binding subunit ClpX (Bacteroides fragilis (strain ATCC 25285 / DSM 2151 / CCUG 4856 / JCM 11019 / LMG 10263 / NCTC 9343 / Onslow / VPI 2553 / EN-2)).